Consider the following 264-residue polypeptide: 3-methyl-2-oxobutanoate hydroxymethyltransferase (264 aa).

Positions 45 and 84 each coordinate Mg(2+). Residues 45–46 (DS), aspartate 84, and lysine 112 contribute to the 3-methyl-2-oxobutanoate site. Glutamate 114 lines the Mg(2+) pocket. Catalysis depends on glutamate 181, which acts as the Proton acceptor.

The protein belongs to the PanB family. Homodecamer; pentamer of dimers. It depends on Mg(2+) as a cofactor.

The protein resides in the cytoplasm. The enzyme catalyses 3-methyl-2-oxobutanoate + (6R)-5,10-methylene-5,6,7,8-tetrahydrofolate + H2O = 2-dehydropantoate + (6S)-5,6,7,8-tetrahydrofolate. It participates in cofactor biosynthesis; (R)-pantothenate biosynthesis; (R)-pantoate from 3-methyl-2-oxobutanoate: step 1/2. In terms of biological role, catalyzes the reversible reaction in which hydroxymethyl group from 5,10-methylenetetrahydrofolate is transferred onto alpha-ketoisovalerate to form ketopantoate. This chain is 3-methyl-2-oxobutanoate hydroxymethyltransferase, found in Escherichia fergusonii (strain ATCC 35469 / DSM 13698 / CCUG 18766 / IAM 14443 / JCM 21226 / LMG 7866 / NBRC 102419 / NCTC 12128 / CDC 0568-73).